A 154-amino-acid polypeptide reads, in one-letter code: Small ribosomal subunit protein uS9 (154 aa).

Residues 135–154 are disordered; the sequence is KESKKYGLKKARKAPQYSKR. The span at 140-154 shows a compositional bias: basic residues; sequence YGLKKARKAPQYSKR.

This sequence belongs to the universal ribosomal protein uS9 family.

This is Small ribosomal subunit protein uS9 from Salinispora arenicola (strain CNS-205).